Reading from the N-terminus, the 267-residue chain is 2-keto-3-deoxy-L-rhamnonate aldolase (267 aa).

H49 (proton acceptor) is an active-site residue. Q151 lines the substrate pocket. Position 153 (E153) interacts with Mg(2+). The substrate site is built by A178 and D179. Residue D179 participates in Mg(2+) binding.

It belongs to the HpcH/HpaI aldolase family. KDR aldolase subfamily. Homohexamer. Mg(2+) is required as a cofactor.

It catalyses the reaction 2-dehydro-3-deoxy-L-rhamnonate = (S)-lactaldehyde + pyruvate. Functionally, catalyzes the reversible retro-aldol cleavage of 2-keto-3-deoxy-L-rhamnonate (KDR) to pyruvate and lactaldehyde. This Salmonella gallinarum (strain 287/91 / NCTC 13346) protein is 2-keto-3-deoxy-L-rhamnonate aldolase.